The primary structure comprises 368 residues: tRNA-specific 2-thiouridylase MnmA (368 aa).

Residues 11–18 (GMSGGVDS) and Met-37 each bind ATP. The tract at residues 97–99 (NPD) is interaction with target base in tRNA. The active-site Nucleophile is the Cys-102. Residues Cys-102 and Cys-199 are joined by a disulfide bond. Gly-127 provides a ligand contact to ATP. The tract at residues 149–151 (KDQ) is interaction with tRNA. Catalysis depends on Cys-199, which acts as the Cysteine persulfide intermediate. Positions 311–312 (RY) are interaction with tRNA.

Belongs to the MnmA/TRMU family.

It is found in the cytoplasm. It catalyses the reaction S-sulfanyl-L-cysteinyl-[protein] + uridine(34) in tRNA + AH2 + ATP = 2-thiouridine(34) in tRNA + L-cysteinyl-[protein] + A + AMP + diphosphate + H(+). In terms of biological role, catalyzes the 2-thiolation of uridine at the wobble position (U34) of tRNA, leading to the formation of s(2)U34. This chain is tRNA-specific 2-thiouridylase MnmA, found in Baumannia cicadellinicola subsp. Homalodisca coagulata.